The sequence spans 157 residues: Peptide methionine sulfoxide reductase MsrA (157 aa).

The active site involves C10.

The protein belongs to the MsrA Met sulfoxide reductase family.

It carries out the reaction L-methionyl-[protein] + [thioredoxin]-disulfide + H2O = L-methionyl-(S)-S-oxide-[protein] + [thioredoxin]-dithiol. The enzyme catalyses [thioredoxin]-disulfide + L-methionine + H2O = L-methionine (S)-S-oxide + [thioredoxin]-dithiol. Its function is as follows. Has an important function as a repair enzyme for proteins that have been inactivated by oxidation. Catalyzes the reversible oxidation-reduction of methionine sulfoxide in proteins to methionine. The polypeptide is Peptide methionine sulfoxide reductase MsrA (Clostridium perfringens (strain 13 / Type A)).